A 443-amino-acid polypeptide reads, in one-letter code: D-serine dehydratase (443 aa).

At lysine 118 the chain carries N6-(pyridoxal phosphate)lysine.

The protein belongs to the serine/threonine dehydratase family. DsdA subfamily. As to quaternary structure, monomer. Pyridoxal 5'-phosphate serves as cofactor.

The catalysed reaction is D-serine = pyruvate + NH4(+). The protein is D-serine dehydratase of Photorhabdus laumondii subsp. laumondii (strain DSM 15139 / CIP 105565 / TT01) (Photorhabdus luminescens subsp. laumondii).